The sequence spans 909 residues: Probable dipeptidyl-aminopeptidase B (909 aa).

A disordered region spans residues 1–63 (MRVGSRINDE…HNHNGRAQGN (63 aa)). Residues 1–94 (MRVGSRINDE…NGKSNQRRTL (94 aa)) lie on the Cytoplasmic side of the membrane. The segment covering 27–38 (DSSSTASISLTL) has biased composition (low complexity). A helical; Signal-anchor for type II membrane protein transmembrane segment spans residues 95 to 115 (IVFWLLVALCVGGWAVAFLFF). Over 116-909 (VTSPGNKTST…YSNFLPIRSF (794 aa)) the chain is Vacuolar. Asn121 is a glycosylation site (N-linked (GlcNAc...) asparagine). A compositionally biased stretch (polar residues) spans 123 to 134 (TSTSPHSGSNSP). A disordered region spans residues 123–144 (TSTSPHSGSNSPEGDVTKPGIP). N-linked (GlcNAc...) asparagine glycans are attached at residues Asn207, Asn303, and Asn355. Ser760 (charge relay system) is an active-site residue. N-linked (GlcNAc...) asparagine glycans are attached at residues Asn814, Asn819, and Asn822. Residues Asp837 and His870 each act as charge relay system in the active site. Asn888 is a glycosylation site (N-linked (GlcNAc...) asparagine).

It belongs to the peptidase S9B family.

Its subcellular location is the vacuole membrane. It catalyses the reaction Release of an N-terminal dipeptide, Xaa-Yaa-|-Zaa-, from a polypeptide, preferentially when Yaa is Pro, provided Zaa is neither Pro nor hydroxyproline.. Type IV dipeptidyl-peptidase which removes N-terminal dipeptides sequentially from polypeptides having unsubstituted N-termini provided that the penultimate residue is proline. The chain is Probable dipeptidyl-aminopeptidase B (DAPB) from Arthroderma benhamiae (strain ATCC MYA-4681 / CBS 112371) (Trichophyton mentagrophytes).